The following is a 508-amino-acid chain: CUGBP Elav-like family member 2 (508 aa).

2 necessary for RNA-binding, TNNT2 exon 5 and NMDA R1 exon 21 inclusion regions span residues 1 to 283 (MRCP…LQNL) and 357 to 508 (LAGM…SKPY). RRM domains follow at residues 40-123 (IKMF…PADS), 132-212 (RKLF…FADT), and 423-501 (ANLF…LKRS).

It belongs to the CELF/BRUNOL family. In terms of assembly, interacts with A1CF. In terms of tissue distribution, expressed in frontal cortex. Isoform 1 is expressed in brain and lung. Isoform 2 is expressed in heart, brain, placenta, lung, liver, kidney, skeletal muscle and pancreas. Isoform 4 is expressed in heart, lung, skeletal muscle, kidney and pancreas.

The protein resides in the nucleus. The protein localises to the cytoplasm. Its function is as follows. RNA-binding protein implicated in the regulation of several post-transcriptional events. Involved in pre-mRNA alternative splicing, mRNA translation and stability. Mediates exon inclusion and/or exclusion in pre-mRNA that are subject to tissue-specific and developmentally regulated alternative splicing. Specifically activates exon 5 inclusion of TNNT2 in embryonic, but not adult, skeletal muscle. Activates TNNT2 exon 5 inclusion by antagonizing the repressive effect of PTB. Acts both as an activator and as a repressor of a pair of coregulated exons: promotes inclusion of the smooth muscle (SM) exon but exclusion of the non-muscle (NM) exon in actinin pre-mRNAs. Promotes inclusion of exonS 21 and exclusion of exon 5 of the NMDA receptor R1 pre-mRNA. Involved in the apoB RNA editing activity. Increases COX2 mRNA stability and inhibits COX2 mRNA translation in epithelial cells after radiation injury. Modulates the cellular apoptosis program by regulating COX2-mediated prostaglandin E2 (PGE2) expression. Binds to (CUG)n triplet repeats in the 3'-UTR of transcripts such as DMPK. Binds to the muscle-specific splicing enhancer (MSE) intronic sites flanking the TNNT2 alternative exon 5. Binds preferentially to UG-rich sequences, in particular UG repeat and UGUU motifs. Binds to apoB mRNA, specifically to AU-rich sequences located immediately upstream of the edited cytidine. Binds AU-rich sequences in the 3'-UTR of COX2 mRNA. Binds to an intronic RNA element responsible for the silencing of exon 21 splicing. Binds to (CUG)n repeats. May be a specific regulator of miRNA biogenesis. Binds to primary microRNA pri-MIR140 and, with CELF1, negatively regulates the processing to mature miRNA. The protein is CUGBP Elav-like family member 2 (CELF2) of Homo sapiens (Human).